The chain runs to 21 residues: Nigrocin-2JDa (21 aa).

An intrachain disulfide couples Cys15 to Cys21.

In terms of tissue distribution, expressed by the skin glands.

It localises to the secreted. Its function is as follows. Has antibacterial activity against E.coli ATCC 25992 (MIC=16 uM), E.coli CIB 84492 (MIC=16 uM), S.aureus ATCC 25923 (MIC=16 uM) and S.aureus CIB 85462 (MIC=8 uM). Has antifungal activity against C.albicans (MIC=63 uM). Has hemolytic activity against rabbit erythrocytes. This is Nigrocin-2JDa from Odorrana jingdongensis (Jingdong frog).